The primary structure comprises 861 residues: Cone cGMP-specific 3',5'-cyclic phosphodiesterase subunit alpha' (861 aa).

2 GAF domains span residues 75–224 (SAEQ…AVAL) and 256–433 (DVER…GWSL). Residues Ser97, Asn116, 169–172 (DKQT), and Thr176 each bind 3',5'-cyclic GMP. The 334-residue stretch at 486 to 819 (EERQLLAILK…VEWKSLAEEY (334 aa)) folds into the PDEase domain. His562 (proton donor) is an active-site residue. A divalent metal cation-binding residues include His566, His602, Asp603, and Asp723. Over residues 826–839 (TEEEAGKQEEEASD) the composition is skewed to basic and acidic residues. Residues 826 to 861 (TEEEAGKQEEEASDGKAATDLGGSAEDKKSKTCLML) are disordered. Cysteine methyl ester is present on Cys858. Cys858 carries S-geranylgeranyl cysteine lipidation. Positions 859–861 (LML) are cleaved as a propeptide — removed in mature form.

The protein belongs to the cyclic nucleotide phosphodiesterase family. Composed of two alpha' subunits that are associated with 3 smaller proteins of 11, 13, and 15 kDa. Requires a divalent metal cation as cofactor.

It is found in the cell membrane. It catalyses the reaction 3',5'-cyclic GMP + H2O = GMP + H(+). Functionally, as cone-specific cGMP phosphodiesterase, it plays an essential role in light detection and cone phototransduction by rapidly decreasing intracellular levels of cGMP. The protein is Cone cGMP-specific 3',5'-cyclic phosphodiesterase subunit alpha' (Pde6c) of Mus musculus (Mouse).